Here is a 402-residue protein sequence, read N- to C-terminus: Elongation factor Tu (402 aa).

The tr-type G domain occupies 10–212 (KPHINIGTIG…AVDEYIPEPK (203 aa)). The G1 stretch occupies residues 19–26 (GHVDHGKT). 19 to 26 (GHVDHGKT) is a binding site for GTP. T26 serves as a coordination point for Mg(2+). The tract at residues 60–64 (GITIA) is G2. Positions 81 to 84 (DCPG) are G3. Residues 81-85 (DCPGH) and 136-139 (NKED) contribute to the GTP site. The tract at residues 136-139 (NKED) is G4. The interval 177 to 179 (SAF) is G5.

Belongs to the TRAFAC class translation factor GTPase superfamily. Classic translation factor GTPase family. EF-Tu/EF-1A subfamily. Monomer.

It localises to the cytoplasm. It catalyses the reaction GTP + H2O = GDP + phosphate + H(+). In terms of biological role, GTP hydrolase that promotes the GTP-dependent binding of aminoacyl-tRNA to the A-site of ribosomes during protein biosynthesis. The protein is Elongation factor Tu of Sulfurovum sp. (strain NBC37-1).